We begin with the raw amino-acid sequence, 83 residues long: UPF0729 protein CBG02799 (83 aa).

Residues 51-83 (QEKKEEEEEKEKSCCSTEAENTTEVTTETKKDQ) are disordered. The segment covering 67 to 76 (TEAENTTEVT) has biased composition (low complexity).

This sequence belongs to the UPF0729 family.

This is UPF0729 protein CBG02799 from Caenorhabditis briggsae.